The following is a 185-amino-acid chain: UPF0397 protein LBA0922 (185 aa).

5 consecutive transmembrane segments (helical) span residues 11–31 (VVAIGIGSAIYVILARFTSIP), 45–65 (FLAFFASIYGATVGFSVGFIG), 72–92 (IMYGQTWWSWVLATGILGWII), 111–131 (IILFNIVQIIANILAWIVVAP), and 146–166 (FVQGISATISNGISILIIGTI).

It belongs to the UPF0397 family.

It localises to the cell membrane. This is UPF0397 protein LBA0922 from Lactobacillus acidophilus (strain ATCC 700396 / NCK56 / N2 / NCFM).